Consider the following 407-residue polypeptide: Argininosuccinate synthase (407 aa).

Residues A16–S24 and A44 each bind ATP. Residues Y96 and S101 each coordinate L-citrulline. G126 provides a ligand contact to ATP. Positions 128, 132, and 133 each coordinate L-aspartate. N132 is a binding site for L-citrulline. L-citrulline is bound by residues R136, S185, S194, E270, and Y282.

This sequence belongs to the argininosuccinate synthase family. Type 1 subfamily. As to quaternary structure, homotetramer.

The protein resides in the cytoplasm. The catalysed reaction is L-citrulline + L-aspartate + ATP = 2-(N(omega)-L-arginino)succinate + AMP + diphosphate + H(+). Its pathway is amino-acid biosynthesis; L-arginine biosynthesis; L-arginine from L-ornithine and carbamoyl phosphate: step 2/3. This chain is Argininosuccinate synthase, found in Shewanella amazonensis (strain ATCC BAA-1098 / SB2B).